The chain runs to 868 residues: Monofunctional pimaradiene synthase (868 aa).

Residues Asp620, Asp624, Asn764, Thr768, and Glu772 each coordinate Mg(2+).

It belongs to the terpene synthase family. Tpsd subfamily. Mg(2+) serves as cofactor.

It catalyses the reaction (+)-copalyl diphosphate = (-)-pimara-8(14),15-diene + diphosphate. Its pathway is terpene metabolism; oleoresin biosynthesis. Functionally, involved in defensive oleoresin formation in conifers in response to insect attack or other injury. Involved in diterpene (C20) olefins biosynthesis. Monofunctional enzyme lacking the DXDD motif in the class II active site relevant for the cyclization of geranylgeranyl diphosphate (GGPP). Requires (+)-copalyl diphosphate ((+)-CPP) as substrate, but no activity with GGPP or ent-CPP. Pimaradiene is the major products of the enzyme. In Pinus contorta (Shore pine), this protein is Monofunctional pimaradiene synthase.